The sequence spans 191 residues: Ribosome maturation factor RimM (191 aa).

The region spanning 114 to 191 is the PRC barrel domain; the sequence is EDEYYWVDLI…RIVVDWQPDY (78 aa).

It belongs to the RimM family. In terms of assembly, binds ribosomal protein uS19.

The protein resides in the cytoplasm. In terms of biological role, an accessory protein needed during the final step in the assembly of 30S ribosomal subunit, possibly for assembly of the head region. Essential for efficient processing of 16S rRNA. May be needed both before and after RbfA during the maturation of 16S rRNA. It has affinity for free ribosomal 30S subunits but not for 70S ribosomes. In Paracidovorax citrulli (strain AAC00-1) (Acidovorax citrulli), this protein is Ribosome maturation factor RimM.